The primary structure comprises 375 residues: Erythronate-4-phosphate dehydrogenase (375 aa).

Substrate contacts are provided by Ser45 and Thr66. The NAD(+) site is built by Asp146 and Thr175. The active site involves Arg208. An NAD(+)-binding site is contributed by Asp232. Glu237 is an active-site residue. His254 (proton donor) is an active-site residue. Gly257 serves as a coordination point for NAD(+). Residue Tyr258 participates in substrate binding.

It belongs to the D-isomer specific 2-hydroxyacid dehydrogenase family. PdxB subfamily. As to quaternary structure, homodimer.

The protein resides in the cytoplasm. The catalysed reaction is 4-phospho-D-erythronate + NAD(+) = (R)-3-hydroxy-2-oxo-4-phosphooxybutanoate + NADH + H(+). It functions in the pathway cofactor biosynthesis; pyridoxine 5'-phosphate biosynthesis; pyridoxine 5'-phosphate from D-erythrose 4-phosphate: step 2/5. Catalyzes the oxidation of erythronate-4-phosphate to 3-hydroxy-2-oxo-4-phosphonooxybutanoate. The protein is Erythronate-4-phosphate dehydrogenase of Yersinia enterocolitica serotype O:8 / biotype 1B (strain NCTC 13174 / 8081).